We begin with the raw amino-acid sequence, 142 residues long: Transcription antitermination protein NusB (142 aa).

The protein belongs to the NusB family.

Its function is as follows. Involved in transcription antitermination. Required for transcription of ribosomal RNA (rRNA) genes. Binds specifically to the boxA antiterminator sequence of the ribosomal RNA (rrn) operons. The sequence is that of Transcription antitermination protein NusB from Levilactobacillus brevis (strain ATCC 367 / BCRC 12310 / CIP 105137 / JCM 1170 / LMG 11437 / NCIMB 947 / NCTC 947) (Lactobacillus brevis).